The chain runs to 91 residues: UPF0250 protein Pfl01_4965 (91 aa).

Belongs to the UPF0250 family.

This Pseudomonas fluorescens (strain Pf0-1) protein is UPF0250 protein Pfl01_4965.